A 304-amino-acid polypeptide reads, in one-letter code: Non-specific ribonucleoside hydrolase RihC (304 aa).

Histidine 233 is a catalytic residue.

It belongs to the IUNH family. RihC subfamily.

In terms of biological role, hydrolyzes both purine and pyrimidine ribonucleosides with a broad-substrate specificity. This is Non-specific ribonucleoside hydrolase RihC from Escherichia coli O7:K1 (strain IAI39 / ExPEC).